We begin with the raw amino-acid sequence, 272 residues long: Universal stress protein MT2699 (272 aa).

Residues Gly-15, 109–115, and 123–124 each bind ATP; these read GSVGIGR and ST.

It belongs to the universal stress protein A family.

The protein is Universal stress protein MT2699 of Mycobacterium tuberculosis (strain CDC 1551 / Oshkosh).